Consider the following 348-residue polypeptide: Chaperone protein DnaJ (348 aa).

The J domain maps to Asp3 to Val65. The CR-type zinc-finger motif lies at Gly109–Pro191. 8 residues coordinate Zn(2+): Cys122, Cys125, Cys139, Cys142, Cys165, Cys168, Cys179, and Cys182. 4 CXXCXGXG motif repeats span residues Cys122 to Arg129, Cys139 to Gly146, Cys165 to Gly172, and Cys179 to Gly186.

Belongs to the DnaJ family. As to quaternary structure, homodimer. The cofactor is Zn(2+).

The protein localises to the cytoplasm. Functionally, participates actively in the response to hyperosmotic and heat shock by preventing the aggregation of stress-denatured proteins and by disaggregating proteins, also in an autonomous, DnaK-independent fashion. Unfolded proteins bind initially to DnaJ; upon interaction with the DnaJ-bound protein, DnaK hydrolyzes its bound ATP, resulting in the formation of a stable complex. GrpE releases ADP from DnaK; ATP binding to DnaK triggers the release of the substrate protein, thus completing the reaction cycle. Several rounds of ATP-dependent interactions between DnaJ, DnaK and GrpE are required for fully efficient folding. Also involved, together with DnaK and GrpE, in the DNA replication of plasmids through activation of initiation proteins. The protein is Chaperone protein DnaJ of Tropheryma whipplei (strain Twist) (Whipple's bacillus).